The chain runs to 485 residues: Expansin-like protein 8 (485 aa).

Residues Met1–Ala21 form the signal peptide. Residues Asp22 to Thr464 lie on the Extracellular side of the membrane. Positions Leu26–Asn139 constitute an Expansin-like EG45 domain. 2 disulfides stabilise this stretch: Cys29–Cys70 and Cys73–Cys134. Residues Asn117 and Asn365 are each glycosylated (N-linked (GlcNAc...) asparagine). The tract at residues Glu408–Gly436 is disordered. Positions Ser414–Gly431 are enriched in low complexity. Residue Asn454 is glycosylated (N-linked (GlcNAc...) asparagine). The helical transmembrane segment at Asn465–Phe485 threads the bilayer.

The protein belongs to the expansin family. Expansin A subfamily.

The protein resides in the membrane. Its function is as follows. May serve to lubricate the movement of the cellulose microfibrils during cell growth and wall extension and/or may serve to maintain the fluid state of the slug cell wall. The sequence is that of Expansin-like protein 8 (expl8) from Dictyostelium discoideum (Social amoeba).